The chain runs to 403 residues: Acetate kinase (403 aa).

Asn-8 is a Mg(2+) binding site. Lys-15 lines the ATP pocket. Arg-90 is a substrate binding site. Asp-147 (proton donor/acceptor) is an active-site residue. Residues 207–211, 282–284, and 330–334 each bind ATP; these read HLGSG, DLR, and GVGEN. Glu-384 lines the Mg(2+) pocket.

Belongs to the acetokinase family. Homodimer. It depends on Mg(2+) as a cofactor. Mn(2+) is required as a cofactor.

The protein localises to the cytoplasm. It catalyses the reaction acetate + ATP = acetyl phosphate + ADP. It functions in the pathway metabolic intermediate biosynthesis; acetyl-CoA biosynthesis; acetyl-CoA from acetate: step 1/2. Catalyzes the formation of acetyl phosphate from acetate and ATP. Can also catalyze the reverse reaction. The polypeptide is Acetate kinase (Exiguobacterium sp. (strain ATCC BAA-1283 / AT1b)).